Here is a 208-residue protein sequence, read N- to C-terminus: ATP-dependent Clp protease proteolytic subunit 1 (208 aa).

S108 functions as the Nucleophile in the catalytic mechanism. Residue H133 is part of the active site.

It belongs to the peptidase S14 family. In terms of assembly, fourteen ClpP subunits assemble into 2 heptameric rings which stack back to back to give a disk-like structure with a central cavity, resembling the structure of eukaryotic proteasomes.

It localises to the cytoplasm. The enzyme catalyses Hydrolysis of proteins to small peptides in the presence of ATP and magnesium. alpha-casein is the usual test substrate. In the absence of ATP, only oligopeptides shorter than five residues are hydrolyzed (such as succinyl-Leu-Tyr-|-NHMec, and Leu-Tyr-Leu-|-Tyr-Trp, in which cleavage of the -Tyr-|-Leu- and -Tyr-|-Trp bonds also occurs).. Functionally, cleaves peptides in various proteins in a process that requires ATP hydrolysis. Has a chymotrypsin-like activity. Plays a major role in the degradation of misfolded proteins. This is ATP-dependent Clp protease proteolytic subunit 1 from Corynebacterium efficiens (strain DSM 44549 / YS-314 / AJ 12310 / JCM 11189 / NBRC 100395).